The sequence spans 651 residues: MLRVQMTDGHTSCTAVEFSYISKISLNTPPGTKVKLSGTVDIKNGFLLLSDSNTTVLGGEVEHLIDKWALQRSLLKHNRSNIGAEGGPPPFLPFGQKCASTVQVDSRELDRRKTLQVSLPAKPTNDNDEFEKQRTAAIAEVAKSKETKTFGGGGGGVRSHLNIGAGGHRNREVSQKEKASKSESKNEGVYRELVDEKALKHITEMGFSKEASRQALMDNANNLEAALNVLLNSSKQKPVVGPPPRGRGKGRGRVRSEDEEDLGNARPSAPSTLFDFLESKMGTLNMEEPRSQPQHLYQGQHRVSNTEQNGIKDGNQSRHLPRNDPRQPRNEKPPRFQRDTPNLKSALENSVLSRNRGSERPSSSSGSDVWAEERIKCDRPYSRYDRTKDASYPLGFQHNDGAFKRRDNSMQNRSGRGPLYAEAKENPHPSEFVDYNNQKRGKRENQTSNPDHFYDRKSRTMNSEAFSGLKIEKHFSANTDYQNPVQSNSFVGVPNGETDMPMKGRRVGPIKPAGPVTAVPYDDKIFYNSGPKRRSGPIKPEKVIESSIPVEYAKMWKPGDECFALYWEDNKFYRAEVEALHSSGMTAVVKFTDYGNYEEVLLSNIKPVQTEAWEEEGTYDHTIEFRRGGDGQPRRSTRPTQQFYQPPRARN.

A disordered region spans residues 147-189 (TKTFGGGGGGVRSHLNIGAGGHRNREVSQKEKASKSESKNEGV). Basic and acidic residues predominate over residues 169-189 (RNREVSQKEKASKSESKNEGV). The region spanning 193-233 (LVDEKALKHITEMGFSKEASRQALMDNANNLEAALNVLLNS) is the UBA domain. Disordered regions lie at residues 234–272 (SKQKPVVGPPPRGRGKGRGRVRSEDEEDLGNARPSAPST), 306–371 (TEQN…DVWA), and 384–459 (YDRT…RKSR). Residue S256 is modified to Phosphoserine. Positions 321–338 (PRNDPRQPRNEKPPRFQR) are enriched in basic and acidic residues. The span at 339-352 (DTPNLKSALENSVL) shows a compositional bias: polar residues. Phosphoserine is present on S345. A Glycyl lysine isopeptide (Lys-Gly) (interchain with G-Cter in SUMO2) cross-link involves residue K470. The Tudor domain occupies 555 to 615 (MWKPGDECFA…KPVQTEAWEE (61 aa)). Positions 624 to 633 (EFRRGGDGQP) are enriched in basic and acidic residues. A disordered region spans residues 624–651 (EFRRGGDGQPRRSTRPTQQFYQPPRARN). The interval 631-651 (GQPRRSTRPTQQFYQPPRARN) is EBM motif; may mediate interaction with the EJC.

Component of mRNA stress granules. Interacts with FMR1, FXR1, FXR2, EWSR1, FUS, SERBP1, EEF1A1 and DDX3X or DDX3Y, and with the small nuclear ribonucleoprotein-associated proteins SNRPB and SNRPN. Interacts with 'Lys-48'-linked tetra-ubiquitin, but not with monoubiquitin or 'Lys-63'-linked ubiquitin chains. May interact with the exon junction complex (EJC) composed at least of CASC3, EIF4A3, MAGOH and RBM8A. Interacts with POLR2A (via the C-terminal domain (CTD)).

The protein resides in the cytoplasm. Its subcellular location is the nucleus. Functionally, scaffolding protein that specifically recognizes and binds dimethylarginine-containing proteins. Plays a role in the regulation of translation of target mRNAs by binding Arg/Gly-rich motifs (GAR) in dimethylarginine-containing proteins. In nucleus, acts as a coactivator: recognizes and binds asymmetric dimethylation on the core histone tails associated with transcriptional activation (H3R17me2a and H4R3me2a) and recruits proteins at these arginine-methylated loci. In cytoplasm, acts as an antiviral factor that participates in the assembly of stress granules together with G3BP1. The protein is Tudor domain-containing protein 3 (Tdrd3) of Rattus norvegicus (Rat).